Here is a 140-residue protein sequence, read N- to C-terminus: ATP synthase epsilon chain (140 aa).

It belongs to the ATPase epsilon chain family. In terms of assembly, F-type ATPases have 2 components, CF(1) - the catalytic core - and CF(0) - the membrane proton channel. CF(1) has five subunits: alpha(3), beta(3), gamma(1), delta(1), epsilon(1). CF(0) has three main subunits: a, b and c.

It is found in the cell inner membrane. Produces ATP from ADP in the presence of a proton gradient across the membrane. This chain is ATP synthase epsilon chain, found in Neisseria gonorrhoeae (strain ATCC 700825 / FA 1090).